Reading from the N-terminus, the 152-residue chain is Large ribosomal subunit protein uL15 (152 aa).

The segment at 18-37 (RVARGIGSGKGKTAGRGVKG) is disordered. Residues 23-35 (IGSGKGKTAGRGV) show a composition bias toward gly residues.

It belongs to the universal ribosomal protein uL15 family. As to quaternary structure, part of the 50S ribosomal subunit.

In terms of biological role, binds to the 23S rRNA. This chain is Large ribosomal subunit protein uL15, found in Rickettsia bellii (strain OSU 85-389).